Here is a 362-residue protein sequence, read N- to C-terminus: Type-1 angiotensin II receptor A (362 aa).

Topologically, residues 1 to 26 are extracellular; sequence MSNASTVETSDVERIAVNCSKSGMHN. N-linked (GlcNAc...) asparagine glycans are attached at residues N3 and N18. 2 cysteine pairs are disulfide-bonded: C19-C273 and C102-C181. Residues 27 to 56 form a helical membrane-spanning segment; it reads YIFIAIPIIYSTIFVVGVFGNSMVVIVIYS. Residues 57-62 are Cytoplasmic-facing; the sequence is YMKMKT. Residues 63 to 90 form a helical membrane-spanning segment; the sequence is VASIFLMNLALSDLCFVITLPLWAAYTA. The Extracellular segment spans residues 91 to 99; that stretch reads MHYHWPFGN. A helical membrane pass occupies residues 100–126; that stretch reads FLCKVASTAITLNLYTTVFLLTCLSID. The Cytoplasmic portion of the chain corresponds to 127-142; that stretch reads RYSAIVHPMKSRIWRT. The helical transmembrane segment at 143–166 threads the bilayer; that stretch reads AMVARLTCVGIWLVAFLASMPSII. The Extracellular segment spans residues 167-191; it reads YRQIYLFHDTNQTVCAIVYDSGHIY. R168 is an angiotensin II binding site. A glycan (N-linked (GlcNAc...) asparagine) is linked at N177. Angiotensin II is bound by residues Y185 and K200. Residues 192–217 traverse the membrane as a helical segment; sequence FMVGMSLAKNIVGFLIPFLIILTSYT. The Cytoplasmic portion of the chain corresponds to 218 to 238; the sequence is LIGKTLKEVYRAQRARNDDIF. The helical transmembrane segment at 239 to 267 threads the bilayer; that stretch reads KMIVAVVLLFFFCWIPYQVFTFLDVLIQM. The Extracellular portion of the chain corresponds to 268–277; the sequence is DVIQNCKMYD. The helical transmembrane segment at 278–303 threads the bilayer; the sequence is IVDTGMPITICIAYFNSCLNPFLYGF. The Cytoplasmic segment spans residues 304-362; it reads FGKNFRKHFLQLIKYIPPKMRTHASVNTKSSLVSSSLSDTKRASKKIALQMTDNEEHCK. A lipid anchor (S-palmitoyl cysteine) is attached at C361.

It belongs to the G-protein coupled receptor 1 family. Post-translationally, C-terminal Ser or Thr residues may be phosphorylated. In terms of tissue distribution, expressed in lung, liver, kidney, and spleen, with highest expression in the heart.

The protein resides in the cell membrane. Functionally, receptor for angiotensin II, a vasoconstricting peptide, which acts as a key regulator of blood pressure and sodium retention by the kidney. The activated receptor in turn couples to G-alpha proteins G(q) (GNAQ, GNA11, GNA14 or GNA15) and thus activates phospholipase C and increases the cytosolic Ca(2+) concentrations, which in turn triggers cellular responses such as stimulation of protein kinase C. In Xenopus laevis (African clawed frog), this protein is Type-1 angiotensin II receptor A (agtr1-a).